Consider the following 533-residue polypeptide: GDP-fucose protein O-fucosyltransferase 4 (533 aa).

Residues 1-20 lie on the Cytoplasmic side of the membrane; sequence MSAGCTQLVWGGRLHWGASH. Residues 21–37 traverse the membrane as a helical; Signal-anchor for type II membrane protein segment; the sequence is LLSCLLALCALWVLAAA. The Lumenal segment spans residues 38-533; that stretch reads EPTEGGSANV…ETYIKRSMNH (496 aa). Asn148, Asn206, and Asn358 each carry an N-linked (GlcNAc...) asparagine glycan. Cys429 and Cys432 are disulfide-bonded. Residue Asn511 is glycosylated (N-linked (GlcNAc...) asparagine).

It belongs to the glycosyltransferase 10 family.

The protein localises to the endoplasmic reticulum membrane. The catalysed reaction is L-threonyl-[protein] + GDP-beta-L-fucose = 3-O-(alpha-L-fucosyl)-L-threonyl-[protein] + GDP + H(+). The enzyme catalyses L-seryl-[protein] + GDP-beta-L-fucose = 3-O-(alpha-L-fucosyl)-L-seryl-[protein] + GDP + H(+). It functions in the pathway protein modification; protein glycosylation. In terms of biological role, protein O-fucosyltransferase that specifically catalyzes O-fucosylation of serine or threonine residues in EMI domains of target proteins. Attaches fucose through an O-glycosidic linkage. O-fucosylation of EMI domain-containing proteins may be required for facilitating protein folding and secretion. The polypeptide is GDP-fucose protein O-fucosyltransferase 4 (fut11) (Xenopus tropicalis (Western clawed frog)).